The primary structure comprises 479 residues: Isoprimeverose transporter (479 aa).

A run of 11 helical transmembrane segments spans residues 54 to 74 (MFFYTDVFGISAAIVGTLFLV), 102 to 122 (PYWLWFAIPFAVFSVLCFTVP), 131 to 151 (VWAYVTYIGVDVLYSAVNIPI), 174 to 194 (FMGTLGATIISTIALPLVAYF), 205 to 225 (WFMVALIMAVIAMVIFFIVFA), 253 to 273 (WPWVIVIFINFIYWLGMQTRS), 289 to 309 (LASFILGLQLVALLAVVITPW), 321 to 341 (LMGMLLAIVGQLILWGGSKAL), 348 to 368 (VGTIVGYLGTGFVSGLIAVML), 397 to 417 (FGMGIGGAVTGLILSAGGYVA), and 431 to 451 (MNYVWVPIVGFGLSAIALLFY).

The protein belongs to the sodium:galactoside symporter (TC 2.A.2) family.

Its subcellular location is the cell membrane. Its function is as follows. Involved in the metabolism of isoprimeverose. Transports isoprimeverose into the cell. Transport is driven by the proton motive force generated by malolactic fermentation. Cannot transport D-xylose. This is Isoprimeverose transporter from Lactiplantibacillus pentosus (Lactobacillus pentosus).